The primary structure comprises 465 residues: Chromosomal replication initiator protein DnaA (465 aa).

A domain I, interacts with DnaA modulators region spans residues 1–85 (MSGFWESCLQ…IALVIGSGKA (85 aa)). Positions 85–129 (ATAARIQATTTDSGQNAPANPATTSEKRTAASEKARGKGSNYEKS) are domain II. The span at 93–108 (TTTDSGQNAPANPATT) shows a compositional bias: polar residues. The disordered stretch occupies residues 93 to 125 (TTTDSGQNAPANPATTSEKRTAASEKARGKGSN). The segment covering 109 to 125 (SEKRTAASEKARGKGSN) has biased composition (basic and acidic residues). The domain III, AAA+ region stretch occupies residues 130–346 (RLFPSFTFDN…GALKKVLAYS (217 aa)). 4 residues coordinate ATP: glycine 174, glycine 176, lysine 177, and threonine 178. Residues 347 to 465 (SFHGRVIALD…LHVLLQVLKG (119 aa)) are domain IV, binds dsDNA.

The protein belongs to the DnaA family. As to quaternary structure, oligomerizes as a right-handed, spiral filament on DNA at oriC.

It localises to the cytoplasm. In terms of biological role, plays an essential role in the initiation and regulation of chromosomal replication. ATP-DnaA binds to the origin of replication (oriC) to initiate formation of the DNA replication initiation complex once per cell cycle. Binds the DnaA box (a 9 base pair repeat at the origin) and separates the double-stranded (ds)DNA. Forms a right-handed helical filament on oriC DNA; dsDNA binds to the exterior of the filament while single-stranded (ss)DNA is stabiized in the filament's interior. The ATP-DnaA-oriC complex binds and stabilizes one strand of the AT-rich DNA unwinding element (DUE), permitting loading of DNA polymerase. After initiation quickly degrades to an ADP-DnaA complex that is not apt for DNA replication. Binds acidic phospholipids. In Dechloromonas aromatica (strain RCB), this protein is Chromosomal replication initiator protein DnaA.